The primary structure comprises 329 residues: 4-hydroxythreonine-4-phosphate dehydrogenase (329 aa).

The substrate site is built by His-136 and Thr-137. A divalent metal cation contacts are provided by His-166, His-211, and His-266. Residues Lys-274, Asn-283, and Arg-292 each coordinate substrate.

This sequence belongs to the PdxA family. As to quaternary structure, homodimer. It depends on Zn(2+) as a cofactor. The cofactor is Mg(2+). Requires Co(2+) as cofactor.

The protein resides in the cytoplasm. The enzyme catalyses 4-(phosphooxy)-L-threonine + NAD(+) = 3-amino-2-oxopropyl phosphate + CO2 + NADH. Its pathway is cofactor biosynthesis; pyridoxine 5'-phosphate biosynthesis; pyridoxine 5'-phosphate from D-erythrose 4-phosphate: step 4/5. In terms of biological role, catalyzes the NAD(P)-dependent oxidation of 4-(phosphooxy)-L-threonine (HTP) into 2-amino-3-oxo-4-(phosphooxy)butyric acid which spontaneously decarboxylates to form 3-amino-2-oxopropyl phosphate (AHAP). In Escherichia coli O139:H28 (strain E24377A / ETEC), this protein is 4-hydroxythreonine-4-phosphate dehydrogenase.